The chain runs to 227 residues: Small ribosomal subunit protein uS3m (227 aa).

Belongs to the universal ribosomal protein uS3 family. In terms of assembly, component of the mitochondrial small ribosomal subunit (mt-SSU). Mature yeast 74S mitochondrial ribosomes consist of a small (37S) and a large (54S) subunit. The 37S small subunit contains a 15S ribosomal RNA (15S mt-rRNA) and at least 32 different proteins. The 54S large subunit contains a 21S rRNA (21S mt-rRNA) and at least 45 different proteins. uS3m, uS4m and uS5m form the narrow entry site of the mRNA channel.

Its subcellular location is the mitochondrion. Its function is as follows. Essential for mitochondrial protein synthesis and required for the maturation of small ribosomal subunits. Component of the mitochondrial ribosome (mitoribosome), a dedicated translation machinery responsible for the synthesis of mitochondrial genome-encoded proteins, including at least some of the essential transmembrane subunits of the mitochondrial respiratory chain. The mitoribosomes are attached to the mitochondrial inner membrane and translation products are cotranslationally integrated into the membrane. uS3m is essential for mitochondrial protein synthesis and required for the maturation of small ribosomal subunits. This Schizosaccharomyces pombe (strain 972 / ATCC 24843) (Fission yeast) protein is Small ribosomal subunit protein uS3m (var1).